Here is a 1018-residue protein sequence, read N- to C-terminus: Unconventional myosin-Ig (1018 aa).

N-acetylmethionine is present on Met1. In terms of domain architecture, Myosin motor spans 9–707 (YGKPDFVLLD…TLVTLEQSRA (699 aa)). 102 to 109 (GESGAGKT) serves as a coordination point for ATP. An actin-binding region spans residues 584 to 606 (MVALVENLASKEPFYVRCIKPNE). Positions 710–739 (IPIIVLLLQKAWRGTLARWRCRRLRAIYTI) constitute an IQ domain. Residues 824–1017 (GLRQDWGCRR…RGSFTLLWPS (194 aa)) form the TH1 domain.

It belongs to the TRAFAC class myosin-kinesin ATPase superfamily. Myosin family. In terms of assembly, interacts with calmodulin; via its IQ motifs. In terms of tissue distribution, specifically expressed in hematopoietic cells.

The protein localises to the cell membrane. It is found in the cell projection. The protein resides in the phagocytic cup. Its function is as follows. Unconventional myosin required during immune response for detection of rare antigen-presenting cells by regulating T-cell migration. Unconventional myosins are actin-based motor molecules with ATPase activity and serve in intracellular movements. Acts as a regulator of T-cell migration by generating membrane tension, enforcing cell-intrinsic meandering search, thereby enhancing detection of rare antigens during lymph-node surveillance, enabling pathogen eradication. Also required in B-cells, where it regulates different membrane/cytoskeleton-dependent processes. Involved in Fc-gamma receptor (Fc-gamma-R) phagocytosis. Functionally, constitutes the minor histocompatibility antigen HA-2. More generally, minor histocompatibility antigens (mHags) refer to immunogenic peptide which, when complexed with MHC, can generate an immune response after recognition by specific T-cells. The peptides are derived from polymorphic intracellular proteins, which are cleaved by normal pathways of antigen processing. The binding of these peptides to MHC class I or class II molecules and their expression on the cell surface can stimulate T-cell responses and thereby trigger graft rejection or graft-versus-host disease (GVHD) after hematopoietic stem cell transplantation from HLA-identical sibling donor. GVHD is a frequent complication after bone marrow transplantation (BMT), due to mismatch of minor histocompatibility antigen in HLA-matched sibling marrow transplants. HA-2 is restricted to MHC class I HLA-A*0201. The polypeptide is Unconventional myosin-Ig (MYO1G) (Homo sapiens (Human)).